A 323-amino-acid polypeptide reads, in one-letter code: Aquaporin NIP3-1 (323 aa).

Residue M1 is modified to N-acetylmethionine. 2 consecutive transmembrane segments (helical) span residues 45 to 65 (LIGE…AIVV) and 73 to 93 (VTLP…IYSI). An NPA 1 motif is present at residues 102–104 (NPA). Helical transmembrane passes span 122–142 (GYIA…RLVF), 167–187 (TSFV…SAVA), and 196–216 (FAGI…GPIS). Residues 221–223 (NPA) carry the NPA 2 motif. The helical transmembrane segment at 239–259 (WLYIVSPVIGALSGAWTYGLL) threads the bilayer.

This sequence belongs to the MIP/aquaporin (TC 1.A.8) family. NIP (TC 1.A.8.12) subfamily.

The protein resides in the membrane. Its function is as follows. Aquaporins facilitate the transport of water and small neutral solutes across cell membranes. This Arabidopsis thaliana (Mouse-ear cress) protein is Aquaporin NIP3-1 (NIP3-1).